Consider the following 213-residue polypeptide: Nucleoside triphosphate pyrophosphatase (213 aa).

D77 acts as the Proton acceptor in catalysis.

This sequence belongs to the Maf family. It depends on a divalent metal cation as a cofactor.

The protein resides in the cytoplasm. It catalyses the reaction a ribonucleoside 5'-triphosphate + H2O = a ribonucleoside 5'-phosphate + diphosphate + H(+). It carries out the reaction a 2'-deoxyribonucleoside 5'-triphosphate + H2O = a 2'-deoxyribonucleoside 5'-phosphate + diphosphate + H(+). Its function is as follows. Nucleoside triphosphate pyrophosphatase. May have a dual role in cell division arrest and in preventing the incorporation of modified nucleotides into cellular nucleic acids. The sequence is that of Nucleoside triphosphate pyrophosphatase from Cutibacterium acnes (strain DSM 16379 / KPA171202) (Propionibacterium acnes).